The following is a 348-amino-acid chain: Heat-inducible transcription repressor HrcA (348 aa).

Belongs to the HrcA family.

Its function is as follows. Negative regulator of class I heat shock genes (grpE-dnaK-dnaJ and groELS operons). Prevents heat-shock induction of these operons. This is Heat-inducible transcription repressor HrcA from Pelotomaculum thermopropionicum (strain DSM 13744 / JCM 10971 / SI).